We begin with the raw amino-acid sequence, 309 residues long: Homoserine O-succinyltransferase (309 aa).

Catalysis depends on cysteine 142, which acts as the Acyl-thioester intermediate. Substrate is bound by residues lysine 163 and serine 192. The active-site Proton acceptor is the histidine 235. Glutamate 237 is a catalytic residue. Residue arginine 249 coordinates substrate.

The protein belongs to the MetA family. As to quaternary structure, homodimer.

It localises to the cytoplasm. It catalyses the reaction L-homoserine + succinyl-CoA = O-succinyl-L-homoserine + CoA. Its pathway is amino-acid biosynthesis; L-methionine biosynthesis via de novo pathway; O-succinyl-L-homoserine from L-homoserine: step 1/1. Its function is as follows. Transfers a succinyl group from succinyl-CoA to L-homoserine, forming succinyl-L-homoserine. In Escherichia coli (strain ATCC 8739 / DSM 1576 / NBRC 3972 / NCIMB 8545 / WDCM 00012 / Crooks), this protein is Homoserine O-succinyltransferase.